Consider the following 395-residue polypeptide: Demethylmacrocin O-methyltransferase (395 aa).

It carries out the reaction demethylmacrocin + S-adenosyl-L-methionine = macrocin + S-adenosyl-L-homocysteine + H(+). The protein operates within antibiotic biosynthesis; tylosin biosynthesis. Its function is as follows. O-methyltransferase that catalyzes the conversion of demethylmacrocin to macrocin, the penultimate step of tylosin antibiotic biosynthesis. Also able to mediate the conversion of demethyllactenocin to lactenocin. This chain is Demethylmacrocin O-methyltransferase (tylE), found in Streptomyces fradiae (Streptomyces roseoflavus).